Consider the following 290-residue polypeptide: Potassium-transporting ATPase subunit beta (290 aa).

Topologically, residues 1 to 36 (MAALQEKKSCSQRMEEFQRYCWNPDTGQMLGRTLSR) are cytoplasmic. The helical; Signal-anchor for type II membrane protein transmembrane segment at 37-57 (WVWISLYYVAFYVVMTGIFAL) threads the bilayer. The Extracellular segment spans residues 58 to 290 (CIYTLMCTLD…KVEFKLTIQQ (233 aa)). Asparagine 99, asparagine 103, asparagine 130, asparagine 146, and asparagine 161 each carry an N-linked (GlcNAc...) asparagine glycan. Cysteines 131 and 152 form a disulfide. A disulfide bond links cysteine 162 and cysteine 178. Residues asparagine 193 and asparagine 221 are each glycosylated (N-linked (GlcNAc...) asparagine). The interval 194–290 (STAPRADCTF…KVEFKLTIQQ (97 aa)) is immunoglobulin-like. Cysteine 201 and cysteine 262 are oxidised to a cystine.

Belongs to the X(+)/potassium ATPases subunit beta family. The ATPase pump is composed of two subunits: alpha (catalytic) and beta (regulatory). Interacts with alpha subunit ATP12A; this interaction is required for the formation of a functionally active pump and targeting at the plasma membrane. Interacts (via N-terminus) with alpha subunit ATP4A (via the P-domain). In terms of processing, N-glycosylation is necessary for assembly and functional expression of the pump at the plasma membrane.

It is found in the apical cell membrane. The protein resides in the cell membrane. In terms of biological role, the beta subunit of the gastric H(+)/K(+) ATPase pump which transports H(+) ions in exchange for K(+) ions across the apical membrane of parietal cells. Plays a structural and regulatory role in the assembly and membrane targeting of a functionally active pump. Within a transport cycle, the transfer of a H(+) ion across the membrane is coupled to ATP hydrolysis and is associated with a transient phosphorylation of the alpha subunit that shifts the pump conformation from inward-facing (E1) to outward-facing state (E2). Interacts with the phosphorylation domain of the alpha subunit and functions as a ratchet, stabilizing the lumenal-open E2 conformation and preventing the reverse reaction of the transport cycle. In Canis lupus familiaris (Dog), this protein is Potassium-transporting ATPase subunit beta (ATP4B).